The primary structure comprises 490 residues: Coagulation factor X (490 aa).

Residues 1–20 (MANPLHLVLLGAALAGLLLS) form the signal peptide. The propeptide occupies 21 to 40 (GSSVFISRRAANDVLARTRR). The Gla domain maps to 41–85 (ANSFLEELKKGNLERECMEENCSYEEALEVFEDREKTNEFWNKYV). Glutamate 46, glutamate 47, glutamate 54, glutamate 56, glutamate 59, and glutamate 60 each carry 4-carboxyglutamate. Cysteine 57 and cysteine 62 form a disulfide bridge. An N-linked (GlcNAc...) asparagine glycan is attached at asparagine 61. 4-carboxyglutamate is present on residues glutamate 65, glutamate 66, glutamate 69, glutamate 72, glutamate 75, and glutamate 79. The EGF-like 1; calcium-binding domain occupies 86–122 (DGDQCESNPCQNQGTCKDGLGMYTCSCVEGYEGQDCE). 11 disulfide bridges follow: cysteine 90–cysteine 101, cysteine 95–cysteine 110, cysteine 112–cysteine 121, cysteine 129–cysteine 140, cysteine 136–cysteine 149, cysteine 151–cysteine 164, cysteine 172–cysteine 340, cysteine 239–cysteine 244, cysteine 259–cysteine 275, cysteine 388–cysteine 402, and cysteine 413–cysteine 441. (3R)-3-hydroxyaspartate is present on aspartate 103. The EGF-like 2 domain maps to 125–165 (TRKLCSLDNGGCDQFCKEEENSVLCSCASGYTLGDNGKSCI). The tract at residues 183 to 230 (SPATNSSEGPPEAPGPEQQDDGNLTATENPFNLLDSPEPPPEDDSSSL) is disordered. Positions 184–232 (PATNSSEGPPEAPGPEQQDDGNLTATENPFNLLDSPEPPPEDDSSSLVR) are cleaved as a propeptide — activation peptide. Asparagine 187 and asparagine 205 each carry an N-linked (GlcNAc...) asparagine glycan. Residues 203-212 (DGNLTATENP) are compositionally biased toward polar residues. The Peptidase S1 domain maps to 233–465 (IVGGQDCRDG…FLKWIEKSMR (233 aa)). Catalysis depends on charge relay system residues histidine 274 and aspartate 320. Serine 417 functions as the Charge relay system in the catalytic mechanism.

The protein belongs to the peptidase S1 family. In terms of assembly, the two chains are formed from a single-chain precursor by the excision of two Arg residues and are held together by 1 or more disulfide bonds. Forms a heterodimer with SERPINA5. In terms of processing, the vitamin K-dependent, enzymatic carboxylation of some glutamate residues allows the modified protein to bind calcium. Post-translationally, N- and O-glycosylated. Proteolytically cleaved and activated by cathepsin CTSG. The activation peptide is cleaved by factor IXa (in the intrinsic pathway), or by factor VIIa (in the extrinsic pathway). In terms of processing, the iron and 2-oxoglutarate dependent 3-hydroxylation of aspartate and asparagine is (R) stereospecific within EGF domains.

The protein localises to the secreted. It carries out the reaction Selective cleavage of Arg-|-Thr and then Arg-|-Ile bonds in prothrombin to form thrombin.. With respect to regulation, inhibited by SERPINA5. In terms of biological role, factor Xa is a vitamin K-dependent glycoprotein that converts prothrombin to thrombin in the presence of factor Va, calcium and phospholipid during blood clotting. Factor Xa activates pro-inflammatory signaling pathways in a protease-activated receptor (PAR)-dependent manner. The protein is Coagulation factor X (F10) of Oryctolagus cuniculus (Rabbit).